We begin with the raw amino-acid sequence, 249 residues long: Ribonuclease 3 (249 aa).

An RNase III domain is found at 21-149 (VDHQPLIDAL…LLGAIYLAHG (129 aa)). Glutamate 62 serves as a coordination point for Mg(2+). Aspartate 66 is a catalytic residue. Mg(2+) is bound by residues aspartate 135 and glutamate 138. Glutamate 138 is a catalytic residue. Positions 176–244 (DWKTTLQERL…AHKAVGFLQD (69 aa)) constitute a DRBM domain.

Belongs to the ribonuclease III family. In terms of assembly, homodimer. The cofactor is Mg(2+).

Its subcellular location is the cytoplasm. The catalysed reaction is Endonucleolytic cleavage to 5'-phosphomonoester.. Digests double-stranded RNA. Involved in the processing of primary rRNA transcript to yield the immediate precursors to the large and small rRNAs (23S and 16S). Processes some mRNAs, and tRNAs when they are encoded in the rRNA operon. Processes pre-crRNA and tracrRNA of type II CRISPR loci if present in the organism. This chain is Ribonuclease 3, found in Corynebacterium diphtheriae (strain ATCC 700971 / NCTC 13129 / Biotype gravis).